The sequence spans 189 residues: Elongation factor P (189 aa).

It belongs to the elongation factor P family.

Its subcellular location is the cytoplasm. It functions in the pathway protein biosynthesis; polypeptide chain elongation. Functionally, involved in peptide bond synthesis. Stimulates efficient translation and peptide-bond synthesis on native or reconstituted 70S ribosomes in vitro. Probably functions indirectly by altering the affinity of the ribosome for aminoacyl-tRNA, thus increasing their reactivity as acceptors for peptidyl transferase. The polypeptide is Elongation factor P (Chloroflexus aggregans (strain MD-66 / DSM 9485)).